Consider the following 365-residue polypeptide: PDZ and LIM domain protein 3 (365 aa).

The region spanning 1–84 is the PDZ domain; sequence MPQNVILPGP…QLCLKIDRAE (84 aa). Ser18 carries the post-translational modification Phosphoserine. Positions 126–156 are disordered; sequence FIIPGRSSGCSTPSGIDGGSGRSTPSSVSTL. Polar residues predominate over residues 147–156; sequence RSTPSSVSTL. The 60-residue stretch at 293 to 352 folds into the LIM zinc-binding domain; sequence PLCDKCGSGIVGAVVKARDKYRHPECFVCADCNLNLKQKGYFFVEGELYCETHARARMRP.

As to quaternary structure, interacts with ACTN2. Forms a heterodimer with PDLIM4 (via LIM domain).

The protein resides in the cytoplasm. It is found in the myofibril. Its subcellular location is the sarcomere. The protein localises to the z line. May play a role in the organization of actin filament arrays within muscle cells. This chain is PDZ and LIM domain protein 3 (PDLIM3), found in Sus scrofa (Pig).